The chain runs to 156 residues: Ribosomal RNA large subunit methyltransferase H (156 aa).

S-adenosyl-L-methionine-binding positions include leucine 73, glycine 104, and 123–128 (LSPLTL).

It belongs to the RNA methyltransferase RlmH family. Homodimer.

The protein resides in the cytoplasm. It carries out the reaction pseudouridine(1915) in 23S rRNA + S-adenosyl-L-methionine = N(3)-methylpseudouridine(1915) in 23S rRNA + S-adenosyl-L-homocysteine + H(+). In terms of biological role, specifically methylates the pseudouridine at position 1915 (m3Psi1915) in 23S rRNA. In Aliivibrio fischeri (strain MJ11) (Vibrio fischeri), this protein is Ribosomal RNA large subunit methyltransferase H.